The chain runs to 576 residues: Coilin (576 aa).

Ser105 carries the phosphoserine modification. Phosphothreonine is present on Thr122. Disordered regions lie at residues Asp125–Ser330 and Arg352–Ala389. Glycyl lysine isopeptide (Lys-Gly) (interchain with G-Cter in SUMO2) cross-links involve residues Lys127, Lys151, and Lys160. Residue Ser184 is modified to Phosphoserine; by VRK1 and VRK2. Residues Lys204 and Lys209 each participate in a glycyl lysine isopeptide (Lys-Gly) (interchain with G-Cter in SUMO2) cross-link. Over residues Gln214–Asn225 the composition is skewed to polar residues. The 1-1 repeat unit spans residues Ala223 to Ser226. The interval Ala223–Ser271 is 2 X 4 AA repeats of A-R-N-S. Residues Ser235–Ser250 show a composition bias toward low complexity. Ser248, Ser250, Ser256, Ser271, and Ser272 each carry phosphoserine. One copy of the 1-2 repeat lies at Ala268–Ser271. The segment covering Asn270–Ser285 has biased composition (basic and acidic residues). Glycyl lysine isopeptide (Lys-Gly) (interchain with G-Cter in SUMO2) cross-links involve residues Lys274 and Lys281. Thr290 is modified (phosphothreonine). Glycyl lysine isopeptide (Lys-Gly) (interchain with G-Cter in SUMO2) cross-links involve residues Lys293 and Lys297. Ser301 is subject to Phosphoserine. Residues Ser301–Ser320 show a composition bias toward low complexity. Thr303 is modified (phosphothreonine). The 2-1 repeat unit spans residues Ser386–Ala389. Positions Ser386 to Ala520 are 2 X 4 AA repeats of S-L-P-A. Positions Gly392 to Gly420 are required for interaction with SMN. Phosphoserine is present on Ser403. 4 tandem repeats follow at residues Arg413–Gly414, Arg415–Gly416, Arg417–Gly418, and Arg419–Gly420. The interval Arg413–Gly420 is 4 X 2 AA tandem repeats of R-G. Lys444 is covalently cross-linked (Glycyl lysine isopeptide (Lys-Gly) (interchain with G-Cter in SUMO2)). Residue Thr456 is modified to Phosphothreonine. Residues Asp460–Asp559 form the Tudor; atypical domain. Ser487 and Ser489 each carry phosphoserine. Lys496 is covalently cross-linked (Glycyl lysine isopeptide (Lys-Gly) (interchain with G-Cter in SUMO2)). The stretch at Ser517–Ala520 is one 2-2 repeat. A Phosphoserine modification is found at Ser566.

This sequence belongs to the coilin family. In terms of assembly, interacts with ANKS1B. Interacts with SMN1 (via Tudor domain). Interacts (via C-terminus) with AK6. Interacts with WRAP53/TCAB1. Interacts with HMBOX1. Interacts with PSME3; the interaction is inhibited by PSME3IP1. Interacts wit UBL5. Symmetrical dimethylation of arginine residues within the RG repeat region enhances affinity for SMN, and thus localization of SMN complexes to CBs. Post-translationally, phosphorylated by VRK1. Phosphorylation during mitosis is associated with disassembly of CBs. In terms of tissue distribution, found in all the cell types examined.

The protein resides in the nucleus. It is found in the cajal body. In terms of biological role, component of nuclear coiled bodies, also known as Cajal bodies or CBs, which are involved in the modification and assembly of nucleoplasmic snRNPs. The chain is Coilin (COIL) from Homo sapiens (Human).